The sequence spans 663 residues: DNA ligase (663 aa).

NAD(+)-binding positions include 33-37, 82-83, and E112; these read DYSYD and SI. The active-site N6-AMP-lysine intermediate is K114. NAD(+) is bound by residues R135, E171, K285, and K309. Positions 403, 406, 419, and 424 each coordinate Zn(2+). The BRCT domain maps to 581–663; sequence DKEAPLQGKV…LRILDAKSVS (83 aa).

The protein belongs to the NAD-dependent DNA ligase family. LigA subfamily. The cofactor is Mg(2+). Mn(2+) serves as cofactor.

The enzyme catalyses NAD(+) + (deoxyribonucleotide)n-3'-hydroxyl + 5'-phospho-(deoxyribonucleotide)m = (deoxyribonucleotide)n+m + AMP + beta-nicotinamide D-nucleotide.. DNA ligase that catalyzes the formation of phosphodiester linkages between 5'-phosphoryl and 3'-hydroxyl groups in double-stranded DNA using NAD as a coenzyme and as the energy source for the reaction. It is essential for DNA replication and repair of damaged DNA. This Chlamydia trachomatis serovar D (strain ATCC VR-885 / DSM 19411 / UW-3/Cx) protein is DNA ligase.